The primary structure comprises 174 residues: Large ribosomal subunit protein uL10 (174 aa).

It belongs to the universal ribosomal protein uL10 family. As to quaternary structure, part of the ribosomal stalk of the 50S ribosomal subunit. The N-terminus interacts with L11 and the large rRNA to form the base of the stalk. The C-terminus forms an elongated spine to which L12 dimers bind in a sequential fashion forming a multimeric L10(L12)X complex.

Functionally, forms part of the ribosomal stalk, playing a central role in the interaction of the ribosome with GTP-bound translation factors. This Pelobacter propionicus (strain DSM 2379 / NBRC 103807 / OttBd1) protein is Large ribosomal subunit protein uL10.